Here is a 160-residue protein sequence, read N- to C-terminus: Transmembrane protein 191A (160 aa).

A helical membrane pass occupies residues 24–44; it reads FCFPLDFVSNLFWIFASKFII.

This sequence belongs to the TMEM191 family.

The protein localises to the membrane. The polypeptide is Transmembrane protein 191A (TMEM191A) (Homo sapiens (Human)).